Here is a 559-residue protein sequence, read N- to C-terminus: Protein QNR-71 (559 aa).

The signal sequence occupies residues 1-22 (MSQAHRHLALLLPAEAVLCAAA). Residues 23–487 (MRFQDVLSNG…NGGSSSGTTK (465 aa)) lie on the Extracellular side of the membrane. Residues Asn92, Asn133, Asn145, Asn149, Asn192, Asn199, Asn248, Asn274, Asn307, and Asn311 are each glycosylated (N-linked (GlcNAc...) asparagine). Positions 239-326 (VSMSQKHDRN…IIPVPCKPVT (88 aa)) constitute a PKD domain. The interval 329–356 (PSLPTPAVTTDASSNSDPSAPNEMAEDN) is disordered. Polar residues predominate over residues 335–347 (AVTTDASSNSDPS). A glycan (N-linked (GlcNAc...) asparagine) is linked at Asn459. Residues 488 to 508 (GVFIFLGLLAVFGAIGAFVLY) form a helical membrane-spanning segment. Over 509–559 (KRYKQYKPIERSAGQAENQEGLSAYVSNFKAFFFPKSTERNPLLKSKPGIV) the chain is Cytoplasmic.

It belongs to the PMEL/NMB family. In terms of tissue distribution, melanocyte-specific, restricted to the pigmented layer of the retina and the epidermis.

Its subcellular location is the membrane. In terms of biological role, could be involved in melanogenesis. The sequence is that of Protein QNR-71 (QNR-71) from Coturnix japonica (Japanese quail).